Here is a 489-residue protein sequence, read N- to C-terminus: Rhamnulokinase (489 aa).

13 to 17 contacts ATP; the sequence is ASSGR. The cysteines at positions 68 and 222 are disulfide-linked. Residues G83 and 236 to 238 each bind substrate; that span reads HDT. D237 acts as the Proton acceptor in catalysis. T259 contributes to the ATP binding site. Position 296 (N296) interacts with substrate. Q304 provides a ligand contact to ATP. Residues C353 and C370 are joined by a disulfide bond. An ATP-binding site is contributed by G402. A disulfide bridge links C413 with C417.

The protein belongs to the rhamnulokinase family. Mg(2+) serves as cofactor.

It catalyses the reaction L-rhamnulose + ATP = L-rhamnulose 1-phosphate + ADP + H(+). It participates in carbohydrate degradation; L-rhamnose degradation; glycerone phosphate from L-rhamnose: step 2/3. In terms of biological role, involved in the catabolism of L-rhamnose (6-deoxy-L-mannose). Catalyzes the transfer of the gamma-phosphate group from ATP to the 1-hydroxyl group of L-rhamnulose to yield L-rhamnulose 1-phosphate. The chain is Rhamnulokinase from Salmonella dublin (strain CT_02021853).